Here is a 189-residue protein sequence, read N- to C-terminus: Elongation factor P (189 aa).

This sequence belongs to the elongation factor P family.

The protein resides in the cytoplasm. It participates in protein biosynthesis; polypeptide chain elongation. Involved in peptide bond synthesis. Stimulates efficient translation and peptide-bond synthesis on native or reconstituted 70S ribosomes in vitro. Probably functions indirectly by altering the affinity of the ribosome for aminoacyl-tRNA, thus increasing their reactivity as acceptors for peptidyl transferase. The chain is Elongation factor P from Pseudomonas syringae pv. syringae (strain B728a).